A 399-amino-acid chain; its full sequence is Methylthioribose kinase (399 aa).

Residues N40, K57, and 111–113 (EDL) each bind ATP. Position 229 (D229) interacts with substrate. 246–248 (DAE) is a binding site for ATP. R344 contributes to the substrate binding site.

The protein belongs to the methylthioribose kinase family. As to quaternary structure, homodimer.

It carries out the reaction 5-(methylsulfanyl)-D-ribose + ATP = 5-(methylsulfanyl)-alpha-D-ribose 1-phosphate + ADP + H(+). The protein operates within amino-acid biosynthesis; L-methionine biosynthesis via salvage pathway; S-methyl-5-thio-alpha-D-ribose 1-phosphate from S-methyl-5'-thioadenosine (hydrolase route): step 2/2. Functionally, catalyzes the phosphorylation of methylthioribose into methylthioribose-1-phosphate. This chain is Methylthioribose kinase, found in Klebsiella pneumoniae subsp. pneumoniae (strain ATCC 700721 / MGH 78578).